The primary structure comprises 264 residues: Thymidylate synthase (264 aa).

DUMP contacts are provided by residues arginine 21 and arginine 126–arginine 127. The Nucleophile role is filled by cysteine 146. DUMP is bound by residues arginine 166–aspartate 169, asparagine 177, and histidine 207–tyrosine 209. Position 169 (aspartate 169) interacts with (6R)-5,10-methylene-5,6,7,8-tetrahydrofolate. Residue alanine 263 coordinates (6R)-5,10-methylene-5,6,7,8-tetrahydrofolate.

It belongs to the thymidylate synthase family. Bacterial-type ThyA subfamily. As to quaternary structure, homodimer.

Its subcellular location is the cytoplasm. It catalyses the reaction dUMP + (6R)-5,10-methylene-5,6,7,8-tetrahydrofolate = 7,8-dihydrofolate + dTMP. It participates in pyrimidine metabolism; dTTP biosynthesis. Functionally, catalyzes the reductive methylation of 2'-deoxyuridine-5'-monophosphate (dUMP) to 2'-deoxythymidine-5'-monophosphate (dTMP) while utilizing 5,10-methylenetetrahydrofolate (mTHF) as the methyl donor and reductant in the reaction, yielding dihydrofolate (DHF) as a by-product. This enzymatic reaction provides an intracellular de novo source of dTMP, an essential precursor for DNA biosynthesis. The polypeptide is Thymidylate synthase (Rhodopseudomonas palustris (strain HaA2)).